We begin with the raw amino-acid sequence, 365 residues long: L-lactate oxidase (365 aa).

One can recognise an FMN hydroxy acid dehydrogenase domain in the interval 2 to 365 (TAISSPINLF…QDIDTSFLHL (364 aa)). A pyruvate-binding site is contributed by Y28. Residues 81–83 (PMA), S110, and Q135 contribute to the FMN site. Y137 serves as a coordination point for pyruvate. An FMN-binding site is contributed by T163. R172 serves as a coordination point for pyruvate. K239 and S261 together coordinate FMN. Pyruvate is bound by residues H263 and R266. The active-site Proton acceptor is the H263. FMN contacts are provided by residues 294–298 (DGGIR) and R318.

This sequence belongs to the FMN-dependent alpha-hydroxy acid dehydrogenase family. As to quaternary structure, homotetramer. FMN is required as a cofactor.

It carries out the reaction (S)-lactate + O2 = pyruvate + H2O2. The enzyme catalyses glyoxylate + O2 + H2O = oxalate + H2O2 + H(+). Catalyzes the oxidation of (S)-lactate (L-lactate) to pyruvate, with a reduction of O2 to H2O2. In extant N2-fixing cyanobacteria such as Nostoc, this enzyme primarily serves as an O2-scavenging enzyme, protecting nitrogenase that is extremely sensitive to O2, and is therefore an essential partner in N2 fixation. Also shows clear oxidase activity with glyoxylate in vitro, and low activity with glycerate, hydroxypyruvate and glycolate. The very low glycolate oxidase activity indicates that this enzyme is unlikely to be involved in photorespiratory glycolate metabolism, a pathway that seems to exist in this cyanobacterium, but in which the oxidation of glycolate is taken over by glycolate dehydrogenase (GlcD). Is not able to use D-lactate as substrate and does not show any dehydrogenase activity with NAD(+) or NADP(+). This Nostoc sp. (strain PCC 7120 / SAG 25.82 / UTEX 2576) protein is L-lactate oxidase.